The sequence spans 85 residues: Cytochrome c2 (85 aa).

Heme c-binding residues include Cys-12, Cys-15, His-16, and Met-61.

It belongs to the cytochrome c family. Post-translationally, binds 1 heme c group covalently per subunit.

Cytochrome c2 is found mainly in purple, non-sulfur, photosynthetic bacteria where it functions as the electron donor to the oxidized bacteriochlorophyll in the photophosphorylation pathway. However, it may also have a role in the respiratory chain and is found in some non-photosynthetic bacteria. The chain is Cytochrome c2 from Rubrivivax gelatinosus (Rhodocyclus gelatinosus).